We begin with the raw amino-acid sequence, 1827 residues long: Sucrase-isomaltase, intestinal (1827 aa).

At 2–12 the chain is on the cytoplasmic side; sequence AKRKFSGLEIT. Position 7 is a phosphoserine; by PKA (Ser-7). Residues 13–32 form a helical; Signal-anchor for type II membrane protein membrane-spanning segment; that stretch reads LIVLFVIVFIIAIALIAVLA. Residues 33–1827 lie on the Lumenal side of the membrane; the sequence is TKTPAVEEVN…LDDPIEISWS (1795 aa). The interval 39 to 64 is disordered; it reads EEVNPSSSTPTTTSTTTSTSGSVSCP. Residues 43–64 show a composition bias toward low complexity; sequence PSSSTPTTTSTTTSTSGSVSCP. A P-type 1 domain is found at 61 to 110; the sequence is VSCPSELNEVVNERINCIPEQSPTQAICAQRNCCWRPWNNSDIPWCFFVD. Disulfide bonds link Cys-63-Cys-94, Cys-77-Cys-93, and Cys-88-Cys-106. The N-linked (GlcNAc...) asparagine glycan is linked to Asn-99. The tract at residues 110–1007 is isomaltase; sequence DNHGYNVEGM…DLQLNPTRTR (898 aa). Residues Asp-264 and Asp-388 each coordinate substrate. Sulfotyrosine occurs at positions 391 and 400. Residue Asn-455 is glycosylated (N-linked (GlcNAc...) asparagine). Asp-505 functions as the Nucleophile; for isomaltase activity in the catalytic mechanism. A disulfide bridge connects residues Cys-520 and Cys-545. Residue Arg-588 participates in substrate binding. The active-site For isomaltase activity is Asp-604. A disulfide bridge connects residues Cys-635 and Cys-646. Residue His-662 coordinates substrate. N-linked (GlcNAc...) asparagine glycosylation is found at Asn-859, Asn-896, and Asn-904. In terms of domain architecture, P-type 2 spans 932–978; the sequence is DQTFLESEKITCYPDADIATQEKCTQRGCIWDTNTVNPRAPECYFPK. A sucrase region spans residues 1008 to 1827; that stretch reads ITLPSEPITN…LDDPIEISWS (820 aa). Residues Asn-1235, Asn-1303, Asn-1325, Asn-1340, Asn-1354, and Asn-1368 are each glycosylated (N-linked (GlcNAc...) asparagine). Sulfotyrosine occurs at positions 1382 and 1385. The Nucleophile; for sucrase activity role is filled by Asp-1394. Glu-1397 acts as the For sucrase activity in catalysis. The N-linked (GlcNAc...) asparagine glycan is linked to Asn-1403. Residue Asp-1500 is the Proton donor; for sucrase activity of the active site. N-linked (GlcNAc...) asparagine glycosylation is found at Asn-1535, Asn-1572, Asn-1748, Asn-1763, and Asn-1799.

The protein belongs to the glycosyl hydrolase 31 family. The resulting sucrase and isomaltase subunits stay associated with one another in a complex by non-covalent linkages. In terms of processing, the precursor is proteolytically cleaved when exposed to pancreatic proteases in the intestinal lumen. Post-translationally, N- and O-glycosylated. Sulfated.

Its subcellular location is the apical cell membrane. The enzyme catalyses Hydrolysis of sucrose and maltose by an alpha-D-glucosidase-type action.. It carries out the reaction Hydrolysis of (1-&gt;6)-alpha-D-glucosidic linkages in some oligosaccharides produced from starch and glycogen by alpha-amylase, and in isomaltose.. In terms of biological role, plays an important role in the final stage of carbohydrate digestion. Isomaltase activity is specific for both alpha-1,4- and alpha-1,6-oligosaccharides. The polypeptide is Sucrase-isomaltase, intestinal (SI) (Oryctolagus cuniculus (Rabbit)).